Consider the following 297-residue polypeptide: MLLGGTSAEREVSFNSGKAVLEALLKQGYNAHPIDPKEYNVANLKKDGFNRAFNILHGRGGEDGTMQGLLEQIGLPYTGCGVMASALTMDKMRTKMLWKAFGLPVADMKVVTRETFAELDPQAVVAKLGLPLMVKPSLEGSSVGLTKVKAVEELKSAVEYALKFDNTILIEEWLAGDELTVSVLDNQVLPAIRIVPEGEFYDYEAKYISDNTQYFCPAGLTPEREQELAILVKRAYDAVGCRGWSRIDVMCDAKGNFRLVEVNTNPGMTSHSLFPKSAATVGISFEQLVVKILELSL.

Positions 95–294 constitute an ATP-grasp domain; that stretch reads KMLWKAFGLP…FEQLVVKILE (200 aa). Residue 125–180 coordinates ATP; sequence VAKLGLPLMVKPSLEGSSVGLTKVKAVEELKSAVEYALKFDNTILIEEWLAGDELT. Mg(2+)-binding residues include Asp248, Glu261, and Asn263.

It belongs to the D-alanine--D-alanine ligase family. It depends on Mg(2+) as a cofactor. The cofactor is Mn(2+).

It localises to the cytoplasm. It carries out the reaction 2 D-alanine + ATP = D-alanyl-D-alanine + ADP + phosphate + H(+). Its pathway is cell wall biogenesis; peptidoglycan biosynthesis. Cell wall formation. The polypeptide is D-alanine--D-alanine ligase (Haemophilus influenzae (strain PittEE)).